The chain runs to 325 residues: BES1/BZR1 homolog protein 4 (325 aa).

A disordered region spans residues 1 to 21; sequence MTSGTRMPTWRERENNKRRER. A required for DNA-binding region spans residues 6-89; it reads RMPTWREREN…RMEIGGGSAT (84 aa). Threonine 169 carries the phosphothreonine modification. A disordered region spans residues 304–325; it reads ERIHEESGSDDLELTLGNSSTR.

The protein belongs to the BZR/LAT61 family. In terms of processing, phosphorylated. Phosphorylation increases protein degradation.

The protein is BES1/BZR1 homolog protein 4 (BEH4) of Arabidopsis thaliana (Mouse-ear cress).